Reading from the N-terminus, the 65-residue chain is Gallinacin-12 (65 aa).

A signal peptide spans 1-19 (MRNLCFVFIFISLLAHGST). 3 disulfide bridges follow: cysteine 25–cysteine 54, cysteine 32–cysteine 47, and cysteine 37–cysteine 55.

Belongs to the beta-defensin family. Expressed in the large intestine, kidney liver, gall bladder, testis, ovary and male and female reproductive tracts. Expressed in the ovarian stroma and the theca and granulosa layers of the ovarian follicle.

It is found in the secreted. The protein localises to the cytoplasmic granule. Functionally, has bactericidal activity. This Gallus gallus (Chicken) protein is Gallinacin-12 (GAL12).